The chain runs to 356 residues: Chorismate synthase (356 aa).

Arg-44 lines the NADP(+) pocket. Residues 121 to 123, Gly-278, 293 to 297, and Arg-320 contribute to the FMN site; these read HFS and KPTPS.

The protein belongs to the chorismate synthase family. FMNH2 serves as cofactor.

It catalyses the reaction 5-O-(1-carboxyvinyl)-3-phosphoshikimate = chorismate + phosphate. The protein operates within metabolic intermediate biosynthesis; chorismate biosynthesis; chorismate from D-erythrose 4-phosphate and phosphoenolpyruvate: step 7/7. Its function is as follows. Catalyzes the anti-1,4-elimination of the C-3 phosphate and the C-6 proR hydrogen from 5-enolpyruvylshikimate-3-phosphate (EPSP) to yield chorismate, which is the branch point compound that serves as the starting substrate for the three terminal pathways of aromatic amino acid biosynthesis. This reaction introduces a second double bond into the aromatic ring system. The polypeptide is Chorismate synthase (Pyrococcus abyssi (strain GE5 / Orsay)).